The following is a 427-amino-acid chain: 3-phosphoshikimate 1-carboxyvinyltransferase (427 aa).

Residues Lys-20, Ser-21, and Arg-25 each coordinate 3-phosphoshikimate. Residue Lys-20 coordinates phosphoenolpyruvate. The phosphoenolpyruvate site is built by Gly-92 and Arg-120. Residues Ser-166, Gln-168, Asp-312, and Lys-339 each contribute to the 3-phosphoshikimate site. Residue Gln-168 participates in phosphoenolpyruvate binding. The active-site Proton acceptor is Asp-312. Residues Arg-343 and Arg-385 each contribute to the phosphoenolpyruvate site.

Belongs to the EPSP synthase family. In terms of assembly, monomer.

Its subcellular location is the cytoplasm. The catalysed reaction is 3-phosphoshikimate + phosphoenolpyruvate = 5-O-(1-carboxyvinyl)-3-phosphoshikimate + phosphate. Its pathway is metabolic intermediate biosynthesis; chorismate biosynthesis; chorismate from D-erythrose 4-phosphate and phosphoenolpyruvate: step 6/7. Catalyzes the transfer of the enolpyruvyl moiety of phosphoenolpyruvate (PEP) to the 5-hydroxyl of shikimate-3-phosphate (S3P) to produce enolpyruvyl shikimate-3-phosphate and inorganic phosphate. The chain is 3-phosphoshikimate 1-carboxyvinyltransferase from Streptococcus pyogenes serotype M28 (strain MGAS6180).